Here is a 680-residue protein sequence, read N- to C-terminus: Glutamine-dependent NAD(+) synthetase (680 aa).

The region spanning 12 to 276 is the CN hydrolase domain; that stretch reads VRVAACTHHA…EHRSVADVDT (265 aa). Residue Glu52 is the Proton acceptor; for glutaminase activity of the active site. Lys121 (for glutaminase activity) is an active-site residue. Tyr127 contacts L-glutamine. The active-site Nucleophile; for glutaminase activity is the Cys176. Residues Ser203 and Arg209 each contribute to the L-glutamine site. 366 to 373 is a binding site for ATP; it reads GVSGGLDS. A deamido-NAD(+)-binding site is contributed by Asn456. Thr480 contacts ATP. Residues Glu485, 490–493, and Lys636 contribute to the deamido-NAD(+) site; that span reads WSTY.

In the C-terminal section; belongs to the NAD synthetase family.

The catalysed reaction is deamido-NAD(+) + L-glutamine + ATP + H2O = L-glutamate + AMP + diphosphate + NAD(+) + H(+). It functions in the pathway cofactor biosynthesis; NAD(+) biosynthesis; NAD(+) from deamido-NAD(+) (L-Gln route): step 1/1. Functionally, catalyzes the ATP-dependent amidation of deamido-NAD to form NAD. Uses L-glutamine as a nitrogen source. This Mycobacterium leprae (strain TN) protein is Glutamine-dependent NAD(+) synthetase.